The primary structure comprises 882 residues: DNA mismatch repair protein MutS (882 aa).

G626–S633 lines the ATP pocket.

Belongs to the DNA mismatch repair MutS family.

This protein is involved in the repair of mismatches in DNA. It is possible that it carries out the mismatch recognition step. This protein has a weak ATPase activity. The protein is DNA mismatch repair protein MutS of Anaeromyxobacter sp. (strain Fw109-5).